A 204-amino-acid chain; its full sequence is uncharacterized protein (204 aa).

Positions 1 to 24 (MPINTFCKISLFICALFCSTVTLA) are cleaved as a signal peptide.

This is an uncharacterized protein from Pasteurella multocida (strain Pm70).